Here is a 301-residue protein sequence, read N- to C-terminus: MKKFSGIIPPVSSTFHRDGTLDKKAMREVADFLINKGVDGLFYLGTGGEFSQMNTAQRMALAEEAVTIVDGRVPVLIGVGSPSTDEAVKLAQHAQAYGADGIVAINPYYWKVAPRNLDDYYQQIARSVTLPVILYNFPDLTGQDLTPETVTRLALQNENIVGIKDTIDSVGHLRTMINTVKSVRPSFSVFCGYDDHLLNTMLLGGDGAITASANFAPELSVGIYRAWREGDLATAATLNKKLLQLPAIYALETPFVSLIKYSMQCVGLPVETYCLPPILEASEEAKDKVHVLLTAQGILPV.

Active-site charge relay system residues include T46 and Y109. Y135 acts as the Proton donor in catalysis. K164 functions as the Schiff-base intermediate with substrate in the catalytic mechanism.

Belongs to the DapA family.

It is found in the cytoplasm. It carries out the reaction 2-dehydro-3-deoxy-D-arabinonate = glycolaldehyde + pyruvate. Functionally, functions as a 2-dehydro-3-deoxy-D-pentonate aldolase. The chain is Probable 2-dehydro-3-deoxy-D-pentonate aldolase YjhH (yjhH) from Escherichia coli (strain K12).